Consider the following 271-residue polypeptide: Phosphatidylglycerol--prolipoprotein diacylglyceryl transferase (271 aa).

7 helical membrane passes run 21–41, 60–80, 95–115, 124–144, 177–197, 203–223, and 236–256; these read LAVR…MWLA, LLFA…VIFY, VWTG…AMFW, FFGV…MGRI, QLYE…WFIG, GSVS…VEYV, and FISM…LMMV. Arg-143 provides a ligand contact to a 1,2-diacyl-sn-glycero-3-phospho-(1'-sn-glycerol).

Belongs to the Lgt family.

The protein resides in the cell inner membrane. The enzyme catalyses L-cysteinyl-[prolipoprotein] + a 1,2-diacyl-sn-glycero-3-phospho-(1'-sn-glycerol) = an S-1,2-diacyl-sn-glyceryl-L-cysteinyl-[prolipoprotein] + sn-glycerol 1-phosphate + H(+). The protein operates within protein modification; lipoprotein biosynthesis (diacylglyceryl transfer). Functionally, catalyzes the transfer of the diacylglyceryl group from phosphatidylglycerol to the sulfhydryl group of the N-terminal cysteine of a prolipoprotein, the first step in the formation of mature lipoproteins. The sequence is that of Phosphatidylglycerol--prolipoprotein diacylglyceryl transferase from Vibrio cholerae serotype O1 (strain ATCC 39541 / Classical Ogawa 395 / O395).